The following is a 275-amino-acid chain: Pyrroline-5-carboxylate reductase (275 aa).

It belongs to the pyrroline-5-carboxylate reductase family.

It is found in the cytoplasm. It carries out the reaction L-proline + NADP(+) = (S)-1-pyrroline-5-carboxylate + NADPH + 2 H(+). It catalyses the reaction L-proline + NAD(+) = (S)-1-pyrroline-5-carboxylate + NADH + 2 H(+). The protein operates within amino-acid biosynthesis; L-proline biosynthesis; L-proline from L-glutamate 5-semialdehyde: step 1/1. Functionally, catalyzes the reduction of 1-pyrroline-5-carboxylate (PCA) to L-proline. The protein is Pyrroline-5-carboxylate reductase of Pasteurella multocida (strain Pm70).